A 145-amino-acid polypeptide reads, in one-letter code: DNA polymerase epsilon subunit 3 (145 aa).

Ala-2 carries the N-acetylalanine modification. The residue at position 83 (Thr-83) is a Phosphothreonine. Residues 85–144 are a coiled coil; the sequence is LKEALEAYRREQKGKKEASEQKKKDKDKKDCEEQDKSREEEDEDEERLDEEEQNEEEEVD. Residues 93-123 are compositionally biased toward basic and acidic residues; the sequence is RREQKGKKEASEQKKKDKDKKDCEEQDKSRE. Residues 93–145 are disordered; that stretch reads RREQKGKKEASEQKKKDKDKKDCEEQDKSREEEDEDEERLDEEEQNEEEEVDN. Phosphoserine is present on Ser-121. The span at 124 to 145 shows a compositional bias: acidic residues; the sequence is EEDEDEERLDEEEQNEEEEVDN.

As to quaternary structure, component of the DNA polymerase epsilon complex consisting of four subunits: the catalytic subunit POLE and the accessory subunits POLE2, POLE3 and POLE4. Interaction with POLE4 is a prerequisite for further binding with POLE and POLE2. Heterodimer with CHRAC1; binds to DNA. Component of the CHRAC ISWI chromatin remodeling complex at least composed of SMARCA5/SNF2H, BAZ1A/ACF1, CHRAC1 and POLE3; the complex preferentially binds DNA through the CHRAC1-POLE3 heterodimer and possesses ATP-dependent nucleosome-remodeling activity. Within the complex, the heterodimer with CHRAC1 interacts with SMARCA5/SNF2H; the interaction is direct and enhances nucleosome sliding activity by the SMARCA5/SNF2H and BAZ1A/ACF1 interaction. Within the complex, the heterodimer with CHRAC1 interacts with BAZ1A/ACF1; the interactions are direct.

The protein resides in the nucleus. Functionally, accessory component of the DNA polymerase epsilon complex. Participates in DNA repair and in chromosomal DNA replication. Forms a complex with CHRAC1 and binds naked DNA, which is then incorporated into chromatin, aided by the nucleosome-remodeling activity of ISWI/SNF2H and ACF1. Does not enhance nucleosome sliding activity of the ACF-5 ISWI chromatin remodeling complex. This Rattus norvegicus (Rat) protein is DNA polymerase epsilon subunit 3 (Pole3).